Here is a 285-residue protein sequence, read N- to C-terminus: Protease HtpX homolog (285 aa).

Helical transmembrane passes span 7 to 27 (TAMLMAAITALFIVIGGMIGG) and 30 to 50 (GMTIALLFALGMNFFSYWFSD). H131 serves as a coordination point for Zn(2+). E132 is an active-site residue. H135 is a Zn(2+) binding site. 2 consecutive transmembrane segments (helical) span residues 146–166 (ITATMAGAISALANFAMFFGG) and 177–197 (IAGIAVALLAPIAGALIQMAI). E202 serves as a coordination point for Zn(2+).

This sequence belongs to the peptidase M48B family. Zn(2+) is required as a cofactor.

It localises to the cell inner membrane. The polypeptide is Protease HtpX homolog (Burkholderia cenocepacia (strain ATCC BAA-245 / DSM 16553 / LMG 16656 / NCTC 13227 / J2315 / CF5610) (Burkholderia cepacia (strain J2315))).